Consider the following 375-residue polypeptide: Palmitoyltransferase PFA4 (375 aa).

At 1–9 (MAVLVKWPW) the chain is on the cytoplasmic side. Residues 10–30 (LGVAIPCFLISFTGYFAHFFV) traverse the membrane as a helical segment. Residues 31–33 (LTN) are Lumenal-facing. A helical membrane pass occupies residues 34 to 54 (FLSFKELLWFQVSLSMIWISY). At 55 to 121 (WKAIYKNPGR…MNCVGYKNFP (67 aa)) the chain is on the cytoplasmic side. The 51-residue stretch at 78 to 128 (NYCTKCETYKPERTHHCKRCNQCVLVMDHHCPWTMNCVGYKNFPHFIRFLF) folds into the DHHC domain. Catalysis depends on C108, which acts as the S-palmitoyl cysteine intermediate. Residues 122 to 142 (HFIRFLFWIIATTGILLHYFV) traverse the membrane as a helical segment. The Lumenal portion of the chain corresponds to 143–164 (KRIKFTWVNRYATANLVSKQEL). Residues 165–185 (IFLTILTPLDAFILLTISLLF) form a helical membrane-spanning segment. At 186–375 (VRCVKNQIVN…EHFGVDVEVE (190 aa)) the chain is on the cytoplasmic side.

This sequence belongs to the DHHC palmitoyltransferase family. PFA4 subfamily.

The protein resides in the endoplasmic reticulum membrane. It carries out the reaction L-cysteinyl-[protein] + hexadecanoyl-CoA = S-hexadecanoyl-L-cysteinyl-[protein] + CoA. Functionally, mediates the reversible addition of palmitate to target proteins, thereby regulating their membrane association and biological function. In Eremothecium gossypii (strain ATCC 10895 / CBS 109.51 / FGSC 9923 / NRRL Y-1056) (Yeast), this protein is Palmitoyltransferase PFA4.